The following is a 212-amino-acid chain: FMN-dependent NADH:quinone oxidoreductase (212 aa).

FMN is bound by residues serine 10 and 17–19 (SFS).

Belongs to the azoreductase type 1 family. As to quaternary structure, homodimer. FMN is required as a cofactor.

The enzyme catalyses 2 a quinone + NADH + H(+) = 2 a 1,4-benzosemiquinone + NAD(+). It carries out the reaction N,N-dimethyl-1,4-phenylenediamine + anthranilate + 2 NAD(+) = 2-(4-dimethylaminophenyl)diazenylbenzoate + 2 NADH + 2 H(+). Functionally, quinone reductase that provides resistance to thiol-specific stress caused by electrophilic quinones. Its function is as follows. Also exhibits azoreductase activity. Catalyzes the reductive cleavage of the azo bond in aromatic azo compounds to the corresponding amines. In Malacoplasma penetrans (strain HF-2) (Mycoplasma penetrans), this protein is FMN-dependent NADH:quinone oxidoreductase.